The following is a 503-amino-acid chain: ATP synthase subunit alpha (503 aa).

169-176 is a binding site for ATP; that stretch reads GDRKTGKT.

Belongs to the ATPase alpha/beta chains family. F-type ATPases have 2 components, CF(1) - the catalytic core - and CF(0) - the membrane proton channel. CF(1) has five subunits: alpha(3), beta(3), gamma(1), delta(1), epsilon(1). CF(0) has three main subunits: a(1), b(2) and c(9-12). The alpha and beta chains form an alternating ring which encloses part of the gamma chain. CF(1) is attached to CF(0) by a central stalk formed by the gamma and epsilon chains, while a peripheral stalk is formed by the delta and b chains.

It is found in the cell membrane. The enzyme catalyses ATP + H2O + 4 H(+)(in) = ADP + phosphate + 5 H(+)(out). Its activity is regulated as follows. Increases 2-fold following exposure to low pH. In terms of biological role, produces ATP from ADP in the presence of a proton gradient across the membrane. The alpha chain is a regulatory subunit. In Lactobacillus acidophilus (strain ATCC 700396 / NCK56 / N2 / NCFM), this protein is ATP synthase subunit alpha.